The sequence spans 316 residues: Coiled-coil domain-containing protein 42 (316 aa).

2 coiled-coil regions span residues R43–I151 and H182–I236.

This sequence belongs to the CFAP73 family. In terms of assembly, interacts with ODF1 and ODF2. Interacts with CCDC38. Interacts with CCDC146. Interacts with CFAP53.

It is found in the cytoplasm. It localises to the perinuclear region. The protein resides in the cytoskeleton. Its subcellular location is the cell projection. The protein localises to the cilium. It is found in the flagellum. It localises to the microtubule organizing center. The protein resides in the centrosome. Essential for male fertility. Required for sperm development. In Bos taurus (Bovine), this protein is Coiled-coil domain-containing protein 42.